Consider the following 76-residue polypeptide: Endothelin-1 (76 aa).

Residues 30–44 are endothelin-like; that stretch reads CQCASQKDKKCWNFC.

This sequence belongs to the endothelin/sarafotoxin family.

It localises to the secreted. Functionally, endothelins are endothelium-derived vasoconstrictor peptides. Probable ligand for G-protein coupled receptors EDNRA and EDNRB which activates PTK2B, BCAR1, BCAR3 and, GTPases RAP1 and RHOA cascade in glomerular mesangial cells. Also binds the DEAR/FBXW7-AS1 receptor. Promotes mesenteric arterial wall remodeling via activation of ROCK signaling and subsequent colocalization of NFATC3 with F-actin filaments. NFATC3 then translocates to the nucleus where it subsequently promotes the transcription of the smooth muscle hypertrophy and differentiation marker ACTA2. The sequence is that of Endothelin-1 (EDN1) from Macaca fascicularis (Crab-eating macaque).